The primary structure comprises 203 residues: Large ribosomal subunit protein uL13 (203 aa).

N-acetylalanine is present on A2. The residue at position 59 (R59) is a Citrulline. S77 bears the Phosphoserine mark. R140 bears the Citrulline mark. N6-acetyllysine is present on K191.

The protein belongs to the universal ribosomal protein uL13 family. In terms of assembly, component of the 60S ribosome. Component of the GAIT complex. Interacts with EIF4G1. Post-translationally, phosphorylation at Ser-77 upon interferon-gamma treatment in macrophages involves a DAPK1-DAPK3 kinase cascade and is causing release from the ribosome, association with the GAIT complex and subsequent involvement in transcript-selective translation inhibition. In terms of processing, citrullinated by PADI4.

The protein localises to the cytoplasm. Its function is as follows. Associated with ribosomes but is not required for canonical ribosome function and has extra-ribosomal functions. Component of the GAIT (gamma interferon-activated inhibitor of translation) complex which mediates interferon-gamma-induced transcript-selective translation inhibition in inflammation processes. Upon interferon-gamma activation and subsequent phosphorylation dissociates from the ribosome and assembles into the GAIT complex which binds to stem loop-containing GAIT elements in the 3'-UTR of diverse inflammatory mRNAs (such as ceruplasmin) and suppresses their translation. In the GAIT complex interacts with m7G cap-bound eIF4G at or near the eIF3-binding site and blocks the recruitment of the 43S ribosomal complex. Involved in methylation of rRNA. The protein is Large ribosomal subunit protein uL13 (RPL13A) of Bos taurus (Bovine).